A 118-amino-acid polypeptide reads, in one-letter code: Small ribosomal subunit protein bS6 (118 aa).

It belongs to the bacterial ribosomal protein bS6 family.

In terms of biological role, binds together with bS18 to 16S ribosomal RNA. This Orientia tsutsugamushi (strain Ikeda) (Rickettsia tsutsugamushi) protein is Small ribosomal subunit protein bS6.